Reading from the N-terminus, the 130-residue chain is DNA-directed RNA polymerase subunit omega (130 aa).

Residues 80 to 130 (PEPDTVPLIGSAGASVDADDTEVAPERMTEEELLKGLEGLAPPEEQPEEDE) are disordered. Positions 103–114 (APERMTEEELLK) are enriched in basic and acidic residues.

This sequence belongs to the RNA polymerase subunit omega family. The RNAP catalytic core consists of 2 alpha, 1 beta, 1 beta' and 1 omega subunit. When a sigma factor is associated with the core the holoenzyme is formed, which can initiate transcription.

The catalysed reaction is RNA(n) + a ribonucleoside 5'-triphosphate = RNA(n+1) + diphosphate. Functionally, promotes RNA polymerase assembly. Latches the N- and C-terminal regions of the beta' subunit thereby facilitating its interaction with the beta and alpha subunits. The sequence is that of DNA-directed RNA polymerase subunit omega from Rhodopseudomonas palustris (strain BisB18).